Here is a 605-residue protein sequence, read N- to C-terminus: Alpha-fetoprotein (605 aa).

Positions 1 to 18 (MKWITPASLILLLHFAAS) are cleaved as a signal peptide. 3 Albumin domains span residues 19–207 (KALH…SIAK), 208–398 (ELRE…EELQ), and 399–597 (KHIE…KLIS). Disulfide bonds link cysteine 95–cysteine 110, cysteine 109–cysteine 120, cysteine 144–cysteine 189, cysteine 188–cysteine 197, cysteine 220–cysteine 266, cysteine 265–cysteine 273, cysteine 285–cysteine 299, and cysteine 298–cysteine 309. Residues serine 107, serine 111, and serine 113 each carry the phosphoserine modification. Asparagine 247 carries an N-linked (GlcNAc...) asparagine glycan. Serine 340 is subject to Phosphoserine. 7 cysteine pairs are disulfide-bonded: cysteine 380–cysteine 389, cysteine 412–cysteine 458, cysteine 457–cysteine 468, cysteine 481–cysteine 497, cysteine 496–cysteine 507, cysteine 534–cysteine 579, and cysteine 578–cysteine 587. Serine 440 is modified (phosphoserine). Asparagine 498 carries N-linked (GlcNAc...) asparagine glycosylation.

Belongs to the ALB/AFP/VDB family. In terms of processing, glycosylated; contains two glycans. Post-translationally, sulfated. As to expression, plasma.

It is found in the secreted. In terms of biological role, binds estrogens, fatty acids and metals. The chain is Alpha-fetoprotein (Afp) from Mus musculus (Mouse).